The following is a 212-amino-acid chain: Dephospho-CoA kinase (212 aa).

Positions 3-204 (ILGLTGSIGM…GSRPAAPVGG (202 aa)) constitute a DPCK domain. 11–16 (GMGKST) is an ATP binding site.

The protein belongs to the CoaE family.

It localises to the cytoplasm. It carries out the reaction 3'-dephospho-CoA + ATP = ADP + CoA + H(+). Its pathway is cofactor biosynthesis; coenzyme A biosynthesis; CoA from (R)-pantothenate: step 5/5. In terms of biological role, catalyzes the phosphorylation of the 3'-hydroxyl group of dephosphocoenzyme A to form coenzyme A. The protein is Dephospho-CoA kinase of Paramagnetospirillum magneticum (strain ATCC 700264 / AMB-1) (Magnetospirillum magneticum).